Consider the following 328-residue polypeptide: Gonadotropin-releasing hormone receptor (328 aa).

Residues 1–38 (MANRAYLEQKQTQCSIINSSFSMTHRDLPTLTLSGKIR) are Extracellular-facing. Residue Asn18 is glycosylated (N-linked (GlcNAc...) asparagine). Residues 39 to 58 (VMVTFFLFLVSTAFNASFLM) form a helical membrane-spanning segment. Residues 59–77 (KLQRQTQKKEEVKKLTRMK) are Cytoplasmic-facing. The chain crosses the membrane as a helical span at residues 78-97 (VLLKHLTLANLLETVIVMPL). Residues 98–115 (DGIWNVTVQWYAGEFLCK) lie on the Extracellular side of the membrane. N-linked (GlcNAc...) asparagine glycosylation is present at Asn102. The cysteines at positions 114 and 196 are disulfide-linked. A helical transmembrane segment spans residues 116–137 (ALSYLKLFSMYAPAFMMVVISL). At 138 to 164 (DRFLAITRPLAVKSNTKVGQSLIAVAW) the chain is on the cytoplasmic side. The helical transmembrane segment at 165 to 184 (FLSIVLAGPQLYIFRMIYVE) threads the bilayer. Topologically, residues 185–212 (DISGQTGNFSQCVTHCSFPEWWQEAFYN) are extracellular. An N-linked (GlcNAc...) asparagine glycan is attached at Asn192. A helical transmembrane segment spans residues 213–232 (LLTFSCLFIGPLLIMLVCNA). The Cytoplasmic segment spans residues 233–281 (KIIFTLTQVLHQDPHELQLNRSKNNIPRARLRTLKMTVAFATLFTICWT). Residues 282–300 (PYYVLGIWYWFDPEMLNRV) traverse the membrane as a helical segment. At 301 to 306 (SDPVNH) the chain is on the extracellular side. Residues 307 to 326 (FFFLFGLLNPCFDPLIYGYF) traverse the membrane as a helical segment. The Cytoplasmic segment spans residues 327–328 (SL).

The protein belongs to the G-protein coupled receptor 1 family.

The protein resides in the cell membrane. Receptor for gonadotropin releasing hormone (GnRH) that mediates the action of GnRH to stimulate the secretion of the gonadotropic hormones luteinizing hormone (LH) and follicle-stimulating hormone (FSH). This receptor mediates its action by association with G-proteins that activate a phosphatidylinositol-calcium second messenger system. This chain is Gonadotropin-releasing hormone receptor (GNRHR), found in Trichosurus vulpecula (Brush-tailed possum).